A 239-amino-acid polypeptide reads, in one-letter code: Bidirectional sugar transporter SWEET8 (239 aa).

Topologically, residues 1–6 are extracellular; that stretch reads MVDAKQ. Residues 7–27 traverse the membrane as a helical segment; the sequence is VRFIIGVIGNVISFGLFAAPA. Residues 9–98 form the MtN3/slv 1 domain; that stretch reads FIIGVIGNVI…VYLMYCGHKK (90 aa). At 28–44 the chain is on the cytoplasmic side; sequence KTFWRIFKKKSVEEFSY. A helical transmembrane segment spans residues 45–65; sequence VPYVATVMNCMLWVFYGLPVV. Residues 66 to 69 lie on the Extracellular side of the membrane; that stretch reads HKDS. Residues 70–90 form a helical membrane-spanning segment; the sequence is ILVSTINGVGLVIELFYVGVY. Topologically, residues 91–103 are cytoplasmic; the sequence is LMYCGHKKNHRRN. The helical transmembrane segment at 104-124 threads the bilayer; it reads ILGFLALEVILVVAIILITLF. At 125–135 the chain is on the extracellular side; it reads ALKGDFVKQTF. Positions 134–185 constitute a MtN3/slv 2 domain; sequence TFVGVICDVFNIAMYGAPSLAIIKVVKTKSVEYMPFLLSLVCFVNAGIWTTY. A helical membrane pass occupies residues 136 to 156; the sequence is VGVICDVFNIAMYGAPSLAII. Residues 157–168 are Cytoplasmic-facing; the sequence is KVVKTKSVEYMP. Residues 169–189 traverse the membrane as a helical segment; that stretch reads FLLSLVCFVNAGIWTTYSLIF. Residues 190-194 lie on the Extracellular side of the membrane; the sequence is KIDYY. A helical membrane pass occupies residues 195 to 215; it reads VLASNGIGTFLALSQLIVYFM. At 216–239 the chain is on the cytoplasmic side; sequence YYKSTPKEKTVKPSEVEISATERV.

Belongs to the SWEET sugar transporter family. In terms of assembly, forms homooligomers and heterooligomers with SWEET4, SWEET5, SWEET6, SWEET7, SWEET9, SWEET10, SWEET11, SWEET13, SWEET15, SWEET16 and SWEET17. As to expression, expressed in inflorescences, embryo sacs and pollen, and at a lower level in stems. Barely detected in roots, leaves and seedlings.

The protein resides in the cell membrane. In terms of biological role, mediates both low-affinity uptake and efflux of sugar across the plasma membrane. Required, in pollen, for microspore cell integrity and primexine pattern formation. The protein is Bidirectional sugar transporter SWEET8 of Arabidopsis thaliana (Mouse-ear cress).